Consider the following 216-residue polypeptide: Octanoyltransferase (216 aa).

One can recognise a BPL/LPL catalytic domain in the interval 32–211; that stretch reads QEASEMLWFL…RFPYFLEALQ (180 aa). Residues 71-78, 142-144, and 155-157 contribute to the substrate site; these read RGGRYTYH, AIG, and GFS. Residue cysteine 173 is the Acyl-thioester intermediate of the active site.

This sequence belongs to the LipB family.

The protein localises to the cytoplasm. It carries out the reaction octanoyl-[ACP] + L-lysyl-[protein] = N(6)-octanoyl-L-lysyl-[protein] + holo-[ACP] + H(+). It functions in the pathway protein modification; protein lipoylation via endogenous pathway; protein N(6)-(lipoyl)lysine from octanoyl-[acyl-carrier-protein]: step 1/2. In terms of biological role, catalyzes the transfer of endogenously produced octanoic acid from octanoyl-acyl-carrier-protein onto the lipoyl domains of lipoate-dependent enzymes. Lipoyl-ACP can also act as a substrate although octanoyl-ACP is likely to be the physiological substrate. The chain is Octanoyltransferase from Zymomonas mobilis subsp. mobilis (strain ATCC 31821 / ZM4 / CP4).